The primary structure comprises 412 residues: Adherens junction-associated protein 1 (412 aa).

An N-terminal signal peptide occupies residues 1 to 43; that stretch reads MWIQQLLGLSSMSIRWPGRSLGSHAWILIAMLQLAVDFPSCDS. The Extracellular portion of the chain corresponds to 44–284; it reads LGPGPEFRLL…GETSGLAVHQ (241 aa). Disordered regions lie at residues 62–175 and 243–271; these read LWSL…GRPT and DPWK…IQPP. Low complexity predominate over residues 121–146; sequence PPAATRSSPSLASATASSSIVTAGAA. Basic and acidic residues predominate over residues 160 to 171; sequence HDTEFNDFDFRG. Positions 248-263 are enriched in low complexity; sequence TPVGVSTTEPSTSPSS. Residues 285 to 305 traverse the membrane as a helical segment; that stretch reads IITITVSLIMVIAALITTLVL. The tract at residues 305-412 is targeting signals; that stretch reads LKNCCAPSGH…VSEKWFEISC (108 aa). Residues 306 to 412 lie on the Cytoplasmic side of the membrane; the sequence is KNCCAPSGHT…VSEKWFEISC (107 aa).

In terms of assembly, forms a complex with CDH1 and CTNNB1; interacts directly with CTNNB1. Interacts with AP1M2 and isoform 2 of BSG/CD147.

The protein resides in the basolateral cell membrane. It localises to the apical cell membrane. It is found in the cell junction. Its subcellular location is the adherens junction. Plays a role in cell adhesion and cell migration. In Mus musculus (Mouse), this protein is Adherens junction-associated protein 1 (Ajap1).